We begin with the raw amino-acid sequence, 398 residues long: Phosphoglycerate kinase (398 aa).

Substrate-binding positions include 21 to 23, Arg-36, 59 to 62, Arg-119, and Arg-157; these read DFN and HLGR. Residues Lys-208, Gly-296, Glu-327, and 354 to 357 contribute to the ATP site; that span reads GGDS.

This sequence belongs to the phosphoglycerate kinase family. As to quaternary structure, monomer.

The protein resides in the cytoplasm. The catalysed reaction is (2R)-3-phosphoglycerate + ATP = (2R)-3-phospho-glyceroyl phosphate + ADP. It functions in the pathway carbohydrate degradation; glycolysis; pyruvate from D-glyceraldehyde 3-phosphate: step 2/5. In Lactococcus lactis subsp. cremoris (strain MG1363), this protein is Phosphoglycerate kinase.